Here is a 360-residue protein sequence, read N- to C-terminus: Uroporphyrinogen decarboxylase (360 aa).

Substrate is bound by residues 31 to 35 (RQAGR), aspartate 81, tyrosine 157, threonine 212, and histidine 333.

The protein belongs to the uroporphyrinogen decarboxylase family. Homodimer.

The protein resides in the cytoplasm. The catalysed reaction is uroporphyrinogen III + 4 H(+) = coproporphyrinogen III + 4 CO2. The protein operates within porphyrin-containing compound metabolism; protoporphyrin-IX biosynthesis; coproporphyrinogen-III from 5-aminolevulinate: step 4/4. Its function is as follows. Catalyzes the decarboxylation of four acetate groups of uroporphyrinogen-III to yield coproporphyrinogen-III. This Janthinobacterium sp. (strain Marseille) (Minibacterium massiliensis) protein is Uroporphyrinogen decarboxylase.